A 477-amino-acid chain; its full sequence is 3-isopropylmalate dehydratase large subunit (477 aa).

Residues Cys-352, Cys-413, and Cys-416 each coordinate [4Fe-4S] cluster.

The protein belongs to the aconitase/IPM isomerase family. LeuC type 1 subfamily. Heterodimer of LeuC and LeuD. [4Fe-4S] cluster serves as cofactor.

The enzyme catalyses (2R,3S)-3-isopropylmalate = (2S)-2-isopropylmalate. Its pathway is amino-acid biosynthesis; L-leucine biosynthesis; L-leucine from 3-methyl-2-oxobutanoate: step 2/4. Catalyzes the isomerization between 2-isopropylmalate and 3-isopropylmalate, via the formation of 2-isopropylmaleate. In Pseudomonas entomophila (strain L48), this protein is 3-isopropylmalate dehydratase large subunit.